The sequence spans 142 residues: Large ribosomal subunit protein uL13 (142 aa).

It belongs to the universal ribosomal protein uL13 family. Part of the 50S ribosomal subunit.

This protein is one of the early assembly proteins of the 50S ribosomal subunit, although it is not seen to bind rRNA by itself. It is important during the early stages of 50S assembly. This is Large ribosomal subunit protein uL13 from Halorhodospira halophila (strain DSM 244 / SL1) (Ectothiorhodospira halophila (strain DSM 244 / SL1)).